The primary structure comprises 815 residues: Tubulin polyglutamylase TTLL13 (815 aa).

Positions 85-430 constitute a TTL domain; sequence RRSLAINLTN…RGCDKRKVME (346 aa). ATP-binding positions include Lys-202, 208-209, 230-233, and 243-245; these read QG, QQYI, and KFD. Residue Gln-208 coordinates a protein. Arg-269 serves as a coordination point for L-glutamate. An ATP-binding site is contributed by 291 to 292; that stretch reads TN. Positions 293 and 311 each coordinate L-glutamate. The Mg(2+) site is built by Asp-376, Glu-389, and Asn-391. The tract at residues 401–482 is c-MTBD region; that stretch reads CLDQEVKDAL…LGKYRRIYPG (82 aa). Lys-407 lines the L-glutamate pocket. Residues 504 to 528 adopt a coiled-coil conformation; the sequence is ASKAREECARQQLEEIRLKQEQQET. A disordered region spans residues 520-556; that stretch reads RLKQEQQETSGTKRQKARDQNQGESAGEKSRPRAGLQ. Residues 536-550 show a composition bias toward basic and acidic residues; sequence ARDQNQGESAGEKSR.

Belongs to the tubulin--tyrosine ligase family. Mg(2+) serves as cofactor.

It catalyses the reaction (L-glutamyl)(n)-gamma-L-glutamyl-L-glutamyl-[protein] + L-glutamate + ATP = (L-glutamyl)(n+1)-gamma-L-glutamyl-L-glutamyl-[protein] + ADP + phosphate + H(+). Functionally, polyglutamylase which modifies tubulin, generating polyglutamate side chains of variable lengths on the gamma-carboxyl group of specific glutamate residues within the C-terminal tail of tubulin. Mediates ATP-dependent polyglutamate side-chain elongation of the polyglutamylation reaction but not the initiation step. Preferentially modifies the alpha-tubulin tail over a beta-tail. The chain is Tubulin polyglutamylase TTLL13 from Homo sapiens (Human).